The primary structure comprises 57 residues: Small ribosomal subunit protein eS27 (57 aa).

Positions 10, 13, 29, and 32 each coordinate Zn(2+). The C4-type zinc finger occupies 10 to 32 (CPDCENEQTVFGKASTEVACAVC).

The protein belongs to the eukaryotic ribosomal protein eS27 family. As to quaternary structure, part of the 30S ribosomal subunit. It depends on Zn(2+) as a cofactor.

This Halobacterium salinarum (strain ATCC 29341 / DSM 671 / R1) protein is Small ribosomal subunit protein eS27.